Here is a 355-residue protein sequence, read N- to C-terminus: MVQRVVDRDYYDILNISVDADGDTIKKSYRRLAILYHPDKNRENPEAAREKFQKLAEAYQVLSDPKLREKYDKLGKVGAVPDAGFEDAFEFFKNLFGGDSFRDYVGELNLLKELCKMINEEPELKAIEDTEESKKQLQREESKEADRLLQERIDVLCKNLLDKLSIWTETDMSDRVTDAFKQKMQFEAELLKDESFGNEMLHAIGSTYVQRANILIQSQSFLGIRGVWGSLCAKGTLLKDTWNTVVSAVDVQSSAAALAKAEEGEEQWSKEKRDEAARELTGKVLSATWKGTRFEVQSVIRTVSDKILYDKAVPLEKRINRANALLMIGQVFLKVAPNEKSDANYFEDLMNDRGK.

The J domain maps to D9–G75.

The protein belongs to the DnaJ family.

Its subcellular location is the cytoplasm. This is an uncharacterized protein from Schizosaccharomyces pombe (strain 972 / ATCC 24843) (Fission yeast).